Here is a 333-residue protein sequence, read N- to C-terminus: Serine/threonine-protein phosphatase 4 catalytic subunit 1 (333 aa).

The segment at 1–29 is disordered; that stretch reads MALAVADTQNETFARSESPTSGPSDQLST. The span at 7-27 shows a compositional bias: polar residues; that stretch reads DTQNETFARSESPTSGPSDQL. 4 residues coordinate Mn(2+): Asp-79, His-81, Asp-107, and Asn-139. The Proton donor role is filled by His-140. Mn(2+)-binding residues include His-189 and His-264. Leu-333 carries the post-translational modification Leucine methyl ester.

This sequence belongs to the PPP phosphatase family. PP-4 (PP-X) subfamily. Serine/threonine-protein phosphatase 4 (PP4) occurs in different assemblies of the catalytic and one or more regulatory subunits. The regulatory subunits are likely to be ppfr-1, ppfr-2, ppfr-4 and smk-1. Interacts with mei-1. Requires Mn(2+) as cofactor. In terms of processing, methylation at the C-terminal Leu-333 is critical for interactions with regulatory subunits.

It is found in the cytoplasm. The protein resides in the cytoskeleton. The protein localises to the microtubule organizing center. It localises to the centrosome. The enzyme catalyses O-phospho-L-seryl-[protein] + H2O = L-seryl-[protein] + phosphate. It catalyses the reaction O-phospho-L-threonyl-[protein] + H2O = L-threonyl-[protein] + phosphate. Protein phosphatase which plays an essential role in meiosis and in early embryonic mitosis. During spermatocyte meiosis and the first embryonic mitosis, regulates centrosome maturation, and thus spindle formation, by recruiting some of the components of the pericentriolar material (PCM). During oocyte meiosis I, regulates meiotic chromosome dynamics including synapsis-independent chromosome pairing, restriction of synapsis to homologous chromosomes, programmed DNA double-strand break initiation and crossover formation resulting in chiasma formation. During oocyte meiosis II and probably together with regulatory subunit ppfr-1, may regulate microtubule severing by dephosphorylating and activating mei-1, a component of the katanin microtubule severing complex. The protein is Serine/threonine-protein phosphatase 4 catalytic subunit 1 (pph-4.1) of Caenorhabditis briggsae.